The primary structure comprises 24 residues: GFLDKLKKGASDFANALVNSIKGT.

In terms of tissue distribution, expressed by the skin glands.

The protein resides in the secreted. Very weak antimicrobial peptide since it does not show activity below 100 ug/ml against Bacillus cereus, Escherichia coli, Leuconostoc mesenteroides, Micrococcus luteus, Pastewella haemolytica, Staphylococcus aureus, Streptococcus faecalis and Streptococcus uberis. In Nyctimystes infrafrenatus (White-lipped tree frog), this protein is Frenatin-4.